The sequence spans 158 residues: NADPH-dependent 7-cyano-7-deazaguanine reductase (158 aa).

A compositionally biased stretch (polar residues) spans 1-13 (MAKRSNTTMTSAG). The disordered stretch occupies residues 1–37 (MAKRSNTTMTSAGLQLGREVAPPDSPETAKLDRVPNP). Over residues 27–37 (ETAKLDRVPNP) the composition is skewed to basic and acidic residues. The active-site Thioimide intermediate is the cysteine 56. The active-site Proton donor is aspartate 63. Residues 78-80 (VES) and 97-98 (HE) contribute to the substrate site.

Belongs to the GTP cyclohydrolase I family. QueF type 1 subfamily.

Its subcellular location is the cytoplasm. It catalyses the reaction 7-aminomethyl-7-carbaguanine + 2 NADP(+) = 7-cyano-7-deazaguanine + 2 NADPH + 3 H(+). Its pathway is tRNA modification; tRNA-queuosine biosynthesis. Functionally, catalyzes the NADPH-dependent reduction of 7-cyano-7-deazaguanine (preQ0) to 7-aminomethyl-7-deazaguanine (preQ1). This chain is NADPH-dependent 7-cyano-7-deazaguanine reductase, found in Bradyrhizobium sp. (strain ORS 278).